Here is a 578-residue protein sequence, read N- to C-terminus: Nuclear receptor subfamily 1 group D member 2 (578 aa).

The required for phosphorylation by CSNK1E and cytoplasmic localization stretch occupies residues 1–60; the sequence is MELNAGGVIAYISSSSSASSPASCHSEGSENSFQSSSSSVPSSPNSSNCDANGNPKNTDV. The interval 1 to 99 is modulating; it reads MELNAGGVIA…HSGMTKFSGM (99 aa). Low complexity predominate over residues 13-47; it reads SSSSSASSPASCHSEGSENSFQSSSSSVPSSPNSS. A disordered region spans residues 13 to 89; it reads SSSSSASSPA…KPGAPGMTKS (77 aa). Residue Ser-46 is modified to Phosphoserine; by GSK3-beta. Residues 48–61 show a composition bias toward polar residues; sequence NCDANGNPKNTDVS. The segment at residues 100 to 176 is a DNA-binding region (nuclear receptor); sequence VLLCKVCGDV…VGMSRDAVRF (77 aa). 2 NR C4-type zinc fingers span residues 103-123 and 140-164; these read CKVC…CEGC and CLKN…FKKC. Lys-162 and Lys-163 each carry N6-acetyllysine; by KAT5. A disordered region spans residues 214-247; that stretch reads EPHEQSVPPAQEQLRPKPQLEQENIKSTPPPSDF. Residues 227–237 show a composition bias toward basic and acidic residues; the sequence is LRPKPQLEQEN. 2 disulfides stabilise this stretch: Cys-336-Cys-342 and Cys-373-Cys-383. One can recognise an NR LBD domain in the interval 368-578; it reads RNSYLCSTGG…EELLAFKVHP (211 aa). Cys-383 and His-567 together coordinate heme. The tract at residues 396–578 is interaction with ZNHIT1; the sequence is SGHEIWEEFS…EELLAFKVHP (183 aa).

This sequence belongs to the nuclear hormone receptor family. NR1 subfamily. As to quaternary structure, binds DNA as a monomer or a homodimer. Interacts with NCOA5 coactivator, leading to a strong increase of transcription of target genes. Interacts (via N-terminus) with KAT5. Interacts (via C-terminus) with HDAC1. Interacts with ZNHIT1. Interacts with SIAH2. In terms of processing, deacetylated by HDAC1. Acetylation and deacetylation regulate its transcriptional regulatory activity. Post-translationally, under more reducing intracellular redox conditions, Cys-383 is in its heme-bound state, which is optimal for recruitment of the NCOR1/HDAC3 corepressor complex and repression of target genes. When subjected to oxidative stress conditions, Cys-383 undergoes oxidation to form a disulfide bridge with Cys-373, also triggering a ligand switch that results in release of bound heme and derepression of target genes. Ubiquitinated by SIAH2; leading to its proteasomal degradation. In terms of processing, phosphorylated by CSNK1E; phosphorylation enhances its cytoplasmic localization.

The protein localises to the nucleus. The protein resides in the cytoplasm. The heme-bound form can bind gaseous signaling molecules such as CO and nitric oxide (NO) and NO can reverse its transcriptional repressor activity. Its function is as follows. Transcriptional repressor which coordinates circadian rhythm and metabolic pathways in a heme-dependent manner. Integral component of the complex transcription machinery that governs circadian rhythmicity and forms a critical negative limb of the circadian clock by directly repressing the expression of core clock components BMAL1 and CLOCK. Also regulates genes involved in metabolic functions, including lipid metabolism and the inflammatory response. Acts as a receptor for heme which stimulates its interaction with the NCOR1/HDAC3 corepressor complex, enhancing transcriptional repression. Recognizes two classes of DNA response elements within the promoter of its target genes and can bind to DNA as either monomers or homodimers, depending on the nature of the response element. Binds as a monomer to a response element composed of the consensus half-site motif 5'-[A/G]GGTCA-3' preceded by an A/T-rich 5' sequence (RevRE), or as a homodimer to a direct repeat of the core motif spaced by two nuclegotides (RevDR-2). Acts as a potent competitive repressor of ROR alpha (RORA) function and also negatively regulates the expression of NR1D1. Regulates lipid and energy homeostasis in the skeletal muscle via repression of genes involved in lipid metabolism and myogenesis including: CD36, FABP3, FABP4, UCP3, SCD1 and MSTN. Regulates hepatic lipid metabolism via the repression of APOC3. Represses gene expression at a distance in macrophages by inhibiting the transcription of enhancer-derived RNAs (eRNAs). In addition to its activity as a repressor, can also act as a transcriptional activator. Acts as a transcriptional activator of the sterol regulatory element-binding protein 1 (SREBF1) and the inflammatory mediator interleukin-6 (IL6) in the skeletal muscle. Plays a role in the regulation of circadian sleep/wake cycle; essential for maintaining wakefulness during the dark phase or active period. Key regulator of skeletal muscle mitochondrial function; negatively regulates the skeletal muscle expression of core clock genes and genes involved in mitochondrial biogenesis, fatty acid beta-oxidation and lipid metabolism. May play a role in the circadian control of neutrophilic inflammation in the lung. The protein is Nuclear receptor subfamily 1 group D member 2 of Rattus norvegicus (Rat).